We begin with the raw amino-acid sequence, 154 residues long: Transcriptional repressor NrdR (154 aa).

The segment at 3–34 (CPFCSAHDTKVIDSRLVAEGDQVRRRRECQAC) is a zinc-finger region. In terms of domain architecture, ATP-cone spans 49-139 (PRVIKQDGSR…VYRRFQDLNE (91 aa)).

It belongs to the NrdR family. Zn(2+) is required as a cofactor.

Its function is as follows. Negatively regulates transcription of bacterial ribonucleotide reductase nrd genes and operons by binding to NrdR-boxes. The chain is Transcriptional repressor NrdR from Azotobacter vinelandii (strain DJ / ATCC BAA-1303).